Reading from the N-terminus, the 436-residue chain is Tubulin epsilon and delta complex protein 2 (436 aa).

Disordered stretches follow at residues 53–76 (ARTP…PSSQ) and 94–191 (VRKG…PSSA). Low complexity predominate over residues 111 to 131 (TSKAATSGAAAASHPRAPSRG). The segment covering 153–170 (DYPEHRLRSKGDKTHVRT) has biased composition (basic and acidic residues). Position 161 is a phosphoserine (S161).

Interacts with TEDC1. Found in a complex with TEDC1, TEDC2, TUBE1 and TUBD1.

It localises to the cell projection. The protein localises to the cilium. The protein resides in the cytoplasm. It is found in the cytoskeleton. Its subcellular location is the microtubule organizing center. It localises to the centrosome. The protein localises to the centriole. In terms of biological role, acts as a positive regulator of ciliary hedgehog signaling. Required for centriole stability. This chain is Tubulin epsilon and delta complex protein 2, found in Mus musculus (Mouse).